Reading from the N-terminus, the 433-residue chain is Succinate--CoA ligase [ADP-forming] subunit beta, mitochondrial (433 aa).

A mitochondrion-targeting transit peptide spans 1–23 (MLTRSVLRKAPRAFSPFLQKRNL). Residues 31–273 (HDILRKFGVD…ISQEDPDEAR (243 aa)) form the ATP-grasp domain. Residues Lys-68, 75–77 (GRG), and Glu-136 each bind ATP. Residues Asn-228 and Asp-242 each contribute to the Mg(2+) site. Residues Asn-293 and 350–352 (GIV) contribute to the substrate site.

Belongs to the succinate/malate CoA ligase beta subunit family. As to quaternary structure, heterodimer of an alpha and a beta subunit. Requires Mg(2+) as cofactor.

It is found in the mitochondrion. The enzyme catalyses succinate + ATP + CoA = succinyl-CoA + ADP + phosphate. It participates in carbohydrate metabolism; tricarboxylic acid cycle; succinate from succinyl-CoA (ligase route): step 1/1. Its function is as follows. Succinyl-CoA synthetase functions in the citric acid cycle (TCA), coupling the hydrolysis of succinyl-CoA to the synthesis of ATP and thus represents the only step of substrate-level phosphorylation in the TCA. The beta subunit provides nucleotide specificity of the enzyme and binds the substrate succinate, while the binding sites for coenzyme A and phosphate are found in the alpha subunit. This Schizosaccharomyces pombe (strain 972 / ATCC 24843) (Fission yeast) protein is Succinate--CoA ligase [ADP-forming] subunit beta, mitochondrial.